We begin with the raw amino-acid sequence, 303 residues long: Methionyl-tRNA formyltransferase (303 aa).

A (6S)-5,6,7,8-tetrahydrofolate-binding site is contributed by 108–111 (SDLP).

This sequence belongs to the Fmt family.

The catalysed reaction is L-methionyl-tRNA(fMet) + (6R)-10-formyltetrahydrofolate = N-formyl-L-methionyl-tRNA(fMet) + (6S)-5,6,7,8-tetrahydrofolate + H(+). Functionally, attaches a formyl group to the free amino group of methionyl-tRNA(fMet). The formyl group appears to play a dual role in the initiator identity of N-formylmethionyl-tRNA by promoting its recognition by IF2 and preventing the misappropriation of this tRNA by the elongation apparatus. This is Methionyl-tRNA formyltransferase from Rickettsia peacockii (strain Rustic).